We begin with the raw amino-acid sequence, 659 residues long: DNA ligase (659 aa).

Residues 31–35 (DFVYD), 80–81 (SL), and Glu109 contribute to the NAD(+) site. Lys111 functions as the N6-AMP-lysine intermediate in the catalytic mechanism. Positions 132, 166, 281, and 305 each coordinate NAD(+). 4 residues coordinate Zn(2+): Cys398, Cys401, Cys416, and Cys421. A BRCT domain is found at 581–659 (VTTHPFNGKT…EATFKVKINE (79 aa)).

This sequence belongs to the NAD-dependent DNA ligase family. LigA subfamily. It depends on Mg(2+) as a cofactor. Mn(2+) is required as a cofactor.

The enzyme catalyses NAD(+) + (deoxyribonucleotide)n-3'-hydroxyl + 5'-phospho-(deoxyribonucleotide)m = (deoxyribonucleotide)n+m + AMP + beta-nicotinamide D-nucleotide.. In terms of biological role, DNA ligase that catalyzes the formation of phosphodiester linkages between 5'-phosphoryl and 3'-hydroxyl groups in double-stranded DNA using NAD as a coenzyme and as the energy source for the reaction. It is essential for DNA replication and repair of damaged DNA. This Acholeplasma laidlawii (strain PG-8A) protein is DNA ligase.